Here is a 155-residue protein sequence, read N- to C-terminus: Protein E6 (155 aa).

Zinc fingers lie at residues 33–69 (CVYC…CRVC) and 106–142 (CYRC…CLQC).

The protein belongs to the papillomaviridae E6 protein family. In terms of assembly, forms homodimers. Interacts with ubiquitin-protein ligase UBE3A/E6-AP; this interaction stimulates UBE3A ubiquitin activity. Interacts with host TP53 and EP300; this interaction inhibits TP53 activity.

The protein resides in the host cytoplasm. It is found in the host nucleus. Its function is as follows. Plays a major role in the induction and maintenance of cellular transformation. E6 associates with host UBE3A/E6-AP ubiquitin-protein ligase and modulates its activity. Sequesters tumor suppressor TP53 in the host cytoplasm and modulates its activity by interacting with host EP300 that results in the reduction of TP53 acetylation and activation. In turn, apoptosis induced by DNA damage is inhibited. E6 also protects host keratinocytes from apoptosis by mediating the degradation of host BAK1. May also inhibit host immune response. The polypeptide is Protein E6 (Homo sapiens (Human)).